The sequence spans 572 residues: Arginine--tRNA ligase (572 aa).

The 'HIGH' region signature appears at P122–H132.

The protein belongs to the class-I aminoacyl-tRNA synthetase family. Monomer.

The protein resides in the cytoplasm. It catalyses the reaction tRNA(Arg) + L-arginine + ATP = L-arginyl-tRNA(Arg) + AMP + diphosphate. In Neisseria gonorrhoeae (strain NCCP11945), this protein is Arginine--tRNA ligase.